A 155-amino-acid chain; its full sequence is Interleukin-2 (155 aa).

The first 20 residues, 1-20, serve as a signal peptide directing secretion; it reads MYKIQLLSCIALTLALVANG. O-linked (GalNAc...) threonine glycosylation occurs at threonine 23. Residues cysteine 79 and cysteine 127 are joined by a disulfide bond.

This sequence belongs to the IL-2 family.

The protein resides in the secreted. Its function is as follows. Cytokine produced by activated CD4-positive helper T-cells and to a lesser extend activated CD8-positive T-cells and natural killer (NK) cells that plays pivotal roles in the immune response and tolerance. Binds to a receptor complex composed of either the high-affinity trimeric IL-2R (IL2RA/CD25, IL2RB/CD122 and IL2RG/CD132) or the low-affinity dimeric IL-2R (IL2RB and IL2RG). Interaction with the receptor leads to oligomerization and conformation changes in the IL-2R subunits resulting in downstream signaling starting with phosphorylation of JAK1 and JAK3. In turn, JAK1 and JAK3 phosphorylate the receptor to form a docking site leading to the phosphorylation of several substrates including STAT5. This process leads to activation of several pathways including STAT, phosphoinositide-3-kinase/PI3K and mitogen-activated protein kinase/MAPK pathways. Functions as a T-cell growth factor and can increase NK-cell cytolytic activity as well. Promotes strong proliferation of activated B-cells and subsequently immunoglobulin production. Plays a pivotal role in regulating the adaptive immune system by controlling the survival and proliferation of regulatory T-cells, which are required for the maintenance of immune tolerance. Moreover, participates in the differentiation and homeostasis of effector T-cell subsets, including Th1, Th2, Th17 as well as memory CD8-positive T-cells. In Bubalus bubalis (Domestic water buffalo), this protein is Interleukin-2 (IL2).